The sequence spans 155 residues: Ubiquinone biosynthesis protein COQ4 homolog, mitochondrial (155 aa).

Belongs to the COQ4 family. As to quaternary structure, component of a multi-subunit COQ enzyme complex. It depends on Zn(2+) as a cofactor.

It localises to the mitochondrion inner membrane. It carries out the reaction a 4-hydroxy-3-methoxy-5-(all-trans-polyprenyl)benzoate + H(+) = a 2-methoxy-6-(all-trans-polyprenyl)phenol + CO2. The protein operates within cofactor biosynthesis; ubiquinone biosynthesis. In terms of biological role, lyase that catalyzes the C1-decarboxylation of 4-hydroxy-3-methoxy-5-(all-trans-polyprenyl)benzoic acid into 2-methoxy-6-(all-trans-polyprenyl)phenol during ubiquinone biosynthesis. The protein is Ubiquinone biosynthesis protein COQ4 homolog, mitochondrial of Cryptosporidium hominis.